We begin with the raw amino-acid sequence, 207 residues long: Large ribosomal subunit protein uL4 (207 aa).

A disordered region spans residues 44–85 (MRQGTHKTKNRAEVSGGGRKPWRQKGTGRARQGSIRSPQWRG).

It belongs to the universal ribosomal protein uL4 family. In terms of assembly, part of the 50S ribosomal subunit.

Functionally, one of the primary rRNA binding proteins, this protein initially binds near the 5'-end of the 23S rRNA. It is important during the early stages of 50S assembly. It makes multiple contacts with different domains of the 23S rRNA in the assembled 50S subunit and ribosome. In terms of biological role, forms part of the polypeptide exit tunnel. The protein is Large ribosomal subunit protein uL4 of Geobacillus thermodenitrificans (strain NG80-2).